An 836-amino-acid chain; its full sequence is Protein O-mannosyl-transferase tmtc2 (836 aa).

The chain crosses the membrane as a helical span at residues 1-21 (MIAELLSSALGLLLYLNTLGA). Over 22 to 77 (DFCYDDSRAIKTNQDLLPETPWNHIFFNDFWGTLLTHSGSHKSYRPLCTLSFRLNY) the chain is Extracellular. The chain crosses the membrane as a helical span at residues 78–98 (LFGGLDPWNYHLVNVLLHSAV). At 99 to 107 (TGLFTNLCK) the chain is on the cytoplasmic side. The chain crosses the membrane as a helical span at residues 108–128 (ALFGSGCWTLIAGLLFASHPI). At 129 to 132 (HTEA) the chain is on the extracellular side. Residues 133–153 (VSGIVGRADVGSGLFFLLSLL) form a helical membrane-spanning segment. Topologically, residues 154–164 (CYMKHCSTRGY) are cytoplasmic. A helical transmembrane segment spans residues 165 to 185 (SLSSWCWILCAGFWAACSMLW). The Extracellular segment spans residues 186–188 (KEQ). The helical transmembrane segment at 189-209 (GVTVLAVSAVYDVFVFHKLKM) threads the bilayer. The Cytoplasmic portion of the chain corresponds to 210–220 (NQIISVVFKEK). The helical transmembrane segment at 221–241 (NVSFFFSVGLLFAWGVILLGA) threads the bilayer. The Extracellular portion of the chain corresponds to 242–312 (RFYWMGNTPP…KTITDWRNIH (71 aa)). The helical transmembrane segment at 313–333 (TVAFYILLILLAYSSLKGSAI) threads the bilayer. Residues 334-392 (KRDCNGKVFMNGKQNTNGHSCQSDLEHKNAEQNPVIASKLENGVKHHNSHEMQLPSTEN) are Cytoplasmic-facing. The chain crosses the membrane as a helical span at residues 393 to 413 (IVVLALSLLIVPFVPASNLFF). Position 414 (Y414) is a topological domain, extracellular. The chain crosses the membrane as a helical span at residues 415-435 (VGFVIAERVLYIPSMGFCLLV). Topologically, residues 436–449 (TVGARALYIKAQKN) are cytoplasmic. The chain crosses the membrane as a helical span at residues 450 to 470 (ILKNLLFYATAALIVFYGLKT). Residues 471-836 (VVRNGDWKNE…EKQGLKNSKT (366 aa)) are Extracellular-facing. TPR repeat units follow at residues 493 to 526 (AKAW…RSNM), 527 to 560 (ADML…RPTL), 561 to 594 (ASGY…PDEN), 606 to 639 (TSCL…MPRQ), 643 to 676 (QSLY…KPDH), 677 to 710 (IPAH…DPNK), 711 to 744 (GNCY…DSSE), 745 to 778 (FDVV…RQNY), and 779 to 812 (PAAL…KPDD).

It belongs to the TMTC family.

Its subcellular location is the membrane. The protein resides in the endoplasmic reticulum. It catalyses the reaction a di-trans,poly-cis-dolichyl beta-D-mannosyl phosphate + L-seryl-[protein] = 3-O-(alpha-D-mannosyl)-L-seryl-[protein] + a di-trans,poly-cis-dolichyl phosphate + H(+). The catalysed reaction is a di-trans,poly-cis-dolichyl beta-D-mannosyl phosphate + L-threonyl-[protein] = 3-O-(alpha-D-mannosyl)-L-threonyl-[protein] + a di-trans,poly-cis-dolichyl phosphate + H(+). It participates in protein modification; protein glycosylation. Its function is as follows. Transfers mannosyl residues to the hydroxyl group of serine or threonine residues. In Xenopus laevis (African clawed frog), this protein is Protein O-mannosyl-transferase tmtc2 (tmtc2).